A 297-amino-acid polypeptide reads, in one-letter code: Probable endonuclease 4 (297 aa).

Positions 69, 110, 145, 179, 182, 214, 227, 229, and 259 each coordinate Zn(2+).

This sequence belongs to the AP endonuclease 2 family. The cofactor is Zn(2+).

The catalysed reaction is Endonucleolytic cleavage to 5'-phosphooligonucleotide end-products.. Functionally, endonuclease IV plays a role in DNA repair. It cleaves phosphodiester bonds at apurinic or apyrimidinic (AP) sites, generating a 3'-hydroxyl group and a 5'-terminal sugar phosphate. This Bacillus velezensis (strain DSM 23117 / BGSC 10A6 / LMG 26770 / FZB42) (Bacillus amyloliquefaciens subsp. plantarum) protein is Probable endonuclease 4.